Reading from the N-terminus, the 381-residue chain is Dual-specificity RNA methyltransferase RlmN (381 aa).

The Proton acceptor role is filled by Glu-86. Positions 105–338 (RHARYTICVS…CTIRQSKGLD (234 aa)) constitute a Radical SAM core domain. A disulfide bridge connects residues Cys-112 and Cys-343. Positions 119, 123, and 126 each coordinate [4Fe-4S] cluster. Residues 169 to 170 (GE), Ser-201, 224 to 226 (SLH), and Asn-300 each bind S-adenosyl-L-methionine. The S-methylcysteine intermediate role is filled by Cys-343. The tract at residues 351–381 (ENPKFRANVSGNSAAKTEEKPTNDKTNVSKK) is disordered.

Belongs to the radical SAM superfamily. RlmN family. [4Fe-4S] cluster is required as a cofactor.

It localises to the cytoplasm. The catalysed reaction is adenosine(2503) in 23S rRNA + 2 reduced [2Fe-2S]-[ferredoxin] + 2 S-adenosyl-L-methionine = 2-methyladenosine(2503) in 23S rRNA + 5'-deoxyadenosine + L-methionine + 2 oxidized [2Fe-2S]-[ferredoxin] + S-adenosyl-L-homocysteine. It carries out the reaction adenosine(37) in tRNA + 2 reduced [2Fe-2S]-[ferredoxin] + 2 S-adenosyl-L-methionine = 2-methyladenosine(37) in tRNA + 5'-deoxyadenosine + L-methionine + 2 oxidized [2Fe-2S]-[ferredoxin] + S-adenosyl-L-homocysteine. In terms of biological role, specifically methylates position 2 of adenine 2503 in 23S rRNA and position 2 of adenine 37 in tRNAs. m2A2503 modification seems to play a crucial role in the proofreading step occurring at the peptidyl transferase center and thus would serve to optimize ribosomal fidelity. This is Dual-specificity RNA methyltransferase RlmN from Campylobacter concisus (strain 13826).